The sequence spans 282 residues: ESX-1 secretion-associated protein EspG1 (282 aa).

It belongs to the EspG family. Interacts specifically with ESX-1-dependent PE/PPE proteins.

It is found in the cytoplasm. Its function is as follows. Part of the ESX-1 / type VII specialized secretion system (T7SS), which exports several proteins including EsxA and EsxB. Specific chaperone for cognate PE/PPE proteins, plays an important role in preventing aggregation of PE/PPE dimers. Also plays a role in DNA conjugation, in at least recipient strain. The polypeptide is ESX-1 secretion-associated protein EspG1 (Mycolicibacterium smegmatis (strain ATCC 700084 / mc(2)155) (Mycobacterium smegmatis)).